Consider the following 457-residue polypeptide: Argininosuccinate lyase (457 aa).

This sequence belongs to the lyase 1 family. Argininosuccinate lyase subfamily.

It localises to the cytoplasm. The catalysed reaction is 2-(N(omega)-L-arginino)succinate = fumarate + L-arginine. The protein operates within amino-acid biosynthesis; L-arginine biosynthesis; L-arginine from L-ornithine and carbamoyl phosphate: step 3/3. The polypeptide is Argininosuccinate lyase (Shigella sonnei (strain Ss046)).